The primary structure comprises 162 residues: Ribosome maturation factor RimP (162 aa).

It belongs to the RimP family.

The protein localises to the cytoplasm. In terms of biological role, required for maturation of 30S ribosomal subunits. This chain is Ribosome maturation factor RimP, found in Streptococcus gordonii (strain Challis / ATCC 35105 / BCRC 15272 / CH1 / DL1 / V288).